A 352-amino-acid chain; its full sequence is Protein-glutamate methylesterase/protein-glutamine glutaminase 2 (352 aa).

A Response regulatory domain is found at 1 to 116 (MVVDDSAVVR…KQFLTDSADE (116 aa)). At Asp50 the chain carries 4-aspartylphosphate. Residues 162-352 (AQTTERIVAI…MAREIVTQLQ (191 aa)) form the CheB-type methylesterase domain. Catalysis depends on residues Ser174, His200, and Asp296.

It belongs to the CheB family. In terms of processing, phosphorylated by CheA. Phosphorylation of the N-terminal regulatory domain activates the methylesterase activity.

The protein resides in the cytoplasm. The enzyme catalyses [protein]-L-glutamate 5-O-methyl ester + H2O = L-glutamyl-[protein] + methanol + H(+). It catalyses the reaction L-glutaminyl-[protein] + H2O = L-glutamyl-[protein] + NH4(+). In terms of biological role, involved in chemotaxis. Part of a chemotaxis signal transduction system that modulates chemotaxis in response to various stimuli. Catalyzes the demethylation of specific methylglutamate residues introduced into the chemoreceptors (methyl-accepting chemotaxis proteins or MCP) by CheR. Also mediates the irreversible deamidation of specific glutamine residues to glutamic acid. The protein is Protein-glutamate methylesterase/protein-glutamine glutaminase 2 of Xanthomonas euvesicatoria pv. vesicatoria (strain 85-10) (Xanthomonas campestris pv. vesicatoria).